A 135-amino-acid chain; its full sequence is MGLISKIARGLVRGADRMAECTSKQGPNSYNKGRGAKKIGYLTASGKFVKVREMVPVFVVPDLTGFKLKPYVSYKAPPGTEDPMTAKKLFMETVGPQIEKDLQEGTFRPEDLEKYGFEPTQEGKLFKLFPRNYIQ.

Residues 1–13 (MGLISKIARGLVR) constitute a mitochondrion transit peptide.

It belongs to the mitochondrion-specific ribosomal protein mL41 family. In terms of assembly, component of the mitochondrial ribosome large subunit (39S) which comprises a 16S rRNA and about 50 distinct proteins.

It is found in the mitochondrion. Functionally, component of the mitochondrial ribosome large subunit. Also involved in apoptosis and cell cycle. The chain is Large ribosomal subunit protein mL41A (mrpl41-a) from Xenopus laevis (African clawed frog).